The sequence spans 683 residues: DNA-directed RNA polymerase subunit beta' (683 aa).

Positions 69, 71, 87, and 90 each coordinate Zn(2+). Mg(2+) contacts are provided by aspartate 489, aspartate 491, and aspartate 493.

The protein belongs to the RNA polymerase beta' chain family. RpoC1 subfamily. As to quaternary structure, in plastids the minimal PEP RNA polymerase catalytic core is composed of four subunits: alpha, beta, beta', and beta''. When a (nuclear-encoded) sigma factor is associated with the core the holoenzyme is formed, which can initiate transcription. Requires Mg(2+) as cofactor. Zn(2+) serves as cofactor.

The protein resides in the plastid. Its subcellular location is the chloroplast. It carries out the reaction RNA(n) + a ribonucleoside 5'-triphosphate = RNA(n+1) + diphosphate. Its function is as follows. DNA-dependent RNA polymerase catalyzes the transcription of DNA into RNA using the four ribonucleoside triphosphates as substrates. This Sorghum bicolor (Sorghum) protein is DNA-directed RNA polymerase subunit beta'.